A 647-amino-acid chain; its full sequence is Auxin efflux carrier component 2 (647 aa).

The Extracellular portion of the chain corresponds to 1 to 7 (MITGKDM). The chain crosses the membrane as a helical span at residues 8 to 28 (YDVLAAMVPLYVAMILAYGSV). The Cytoplasmic portion of the chain corresponds to 29-38 (RWWGIFTPDQ). The helical transmembrane segment at 39–59 (CSGINRFVAVFAVPLLSFHFI) threads the bilayer. V51 provides a ligand contact to (indol-3-yl)acetate. Residues 60–68 (SSNDPYAMN) lie on the Extracellular side of the membrane. A helical membrane pass occupies residues 69 to 89 (YHFLAADSLQKVVILAALFLW). Residues 90–100 (QAFSRRGSLEW) are Cytoplasmic-facing. The helical transmembrane segment at 101-121 (MITLFSLSTLPNTLVMGIPLL) threads the bilayer. (indol-3-yl)acetate is bound by residues N112 and L114. Residues 122-131 (RAMYGDFSGN) are Extracellular-facing. The helical transmembrane segment at 132–152 (LMVQIVVLQSIIWYTLMLFLF) threads the bilayer. Y145 is a (indol-3-yl)acetate binding site. The Cytoplasmic portion of the chain corresponds to 153–507 (EFRGAKLLIS…LIRNPNTYSS (355 aa)). S237, S258, and S310 each carry phosphoserine. Residues 339 to 380 (SVPSYPPPNPMFTGSTSGASGVKKKESGGGGSGGGVGVGGQN) form a disordered region. T354 carries the post-translational modification Phosphothreonine. Residues 366 to 378 (GGGGSGGGVGVGG) are compositionally biased toward gly residues. S393 carries the post-translational modification Phosphoserine. Disordered stretches follow at residues 397-420 (EANA…KVSI) and 440-481 (PGRK…QQMP). A helical membrane pass occupies residues 508–528 (LFGLAWSLVSFKWNIKMPTIM). The Extracellular segment spans residues 529 to 531 (SGS). Residues 532–552 (ISILSDAGLGMAMFSLGLFMA) traverse the membrane as a helical segment. The Cytoplasmic segment spans residues 553-568 (LQPKIIACGKSVAGFA). The helical transmembrane segment at 569 to 589 (MAVRFLTGPAVIAATSIAIGI) threads the bilayer. Topologically, residues 590–592 (RGD) are extracellular. A helical membrane pass occupies residues 593-613 (LLHIAIVQAALPQGIVPFVFA). (indol-3-yl)acetate is bound by residues I607 and V608. The Cytoplasmic portion of the chain corresponds to 614 to 626 (KEYNVHPDILSTA). The chain crosses the membrane as a helical span at residues 627–647 (VIFGMLVALPVTVLYYVLLGL).

It belongs to the auxin efflux carrier (TC 2.A.69.1) family. As to quaternary structure, homodimer. Interacts with FYPP1 and FYPP3. Component of a complex made of PINs (e.g. PIN1 and PIN2), MAB4/MELs (e.g. NPY1/MAB4 and NPY5/MEL1) and AGC kinases (e.g. D6PK and PID) at the plasma membrane. Binds directly to NPY1/MAB4, NPY5/MEL1 and PID. In terms of tissue distribution, root-specific. Localized to the cortex, epidermis and lateral root cap, predominantly at the upper side of cells.

The protein localises to the cell membrane. Functionally, acts as a component of the auxin efflux carrier. Seems to be involved in the root-specific auxin transport, and mediates the root gravitropism. Its particular localization suggests a role in the translocation of auxin towards the elongation zone. Recrutes NPY proteins (e.g. NPY1/MAB4 and NPY5/MEL1) to the plasma membrane in a polar basal localization in root epidermis; this activity is optimized by AGC kinases-mediated (e.g. D6PK and PID) phosphorylation that limits their lateral diffusion-based escape. In Arabidopsis thaliana (Mouse-ear cress), this protein is Auxin efflux carrier component 2.